The primary structure comprises 274 residues: MDSLNYTTACDSAVETENQSDNSSSGSSLFKTQCVPVPPKRRQRNTIRKFVHIPKNTQATESSSDSSIEPRPLTLKAIFERFKNKKRKRKKKKYKPTGRSVGRPKGRRTTRYSQITEKQFKDKRPGFPFLESENGRKPLPWRKILTFEQAVARGFFNYLEKLKYEYYLKESLKQMNVAEDLEKDDLDSRRYRYLDDDGSLSPIEESAAEEETAANLEHDECDIKLVENSYFIISSEFPKKKQNVHLDQEEYTEETALLKKRTSKSKHWIEDKMA.

Residues 1–19 are compositionally biased toward polar residues; the sequence is MDSLNYTTACDSAVETENQ. 2 disordered regions span residues 1 to 45 and 84 to 111; these read MDSL…RQRN and NKKR…RTTR. Residue serine 20 is modified to Phosphoserine. Positions 84–110 are enriched in basic residues; sequence NKKRKRKKKKYKPTGRSVGRPKGRRTT. 2 positions are modified to phosphoserine: serine 132 and serine 229.

In terms of assembly, component of the transcription factor SL1/TIF-IB complex, composed of TBP and at least TAF1A, TAF1B, TAF1C and TAF1D. Interacts with UBTF.

It is found in the nucleus. Component of the transcription factor SL1/TIF-IB complex, which is involved in the assembly of the PIC (preinitiation complex) during RNA polymerase I-dependent transcription. The rate of PIC formation probably is primarily dependent on the rate of association of SL1/TIF-IB with the rDNA promoter. SL1/TIF-IB is involved in stabilization of nucleolar transcription factor 1/UBTF on rDNA. Formation of SL1/TIF-IB excludes the association of TBP with TFIID subunits. This Bos taurus (Bovine) protein is TATA box-binding protein-associated factor RNA polymerase I subunit D (TAF1D).